The primary structure comprises 286 residues: Acetyl-coenzyme A carboxylase carboxyl transferase subunit beta (286 aa).

The region spanning Leu-27–Ile-286 is the CoA carboxyltransferase N-terminal domain. Residues Cys-31, Cys-34, Cys-50, and Cys-52 each contribute to the Zn(2+) site. Residues Cys-31–Cys-52 form a C4-type zinc finger.

Belongs to the AccD/PCCB family. As to quaternary structure, acetyl-CoA carboxylase is a heterohexamer composed of biotin carboxyl carrier protein (AccB), biotin carboxylase (AccC) and two subunits each of ACCase subunit alpha (AccA) and ACCase subunit beta (AccD). The cofactor is Zn(2+).

Its subcellular location is the cytoplasm. The catalysed reaction is N(6)-carboxybiotinyl-L-lysyl-[protein] + acetyl-CoA = N(6)-biotinyl-L-lysyl-[protein] + malonyl-CoA. The protein operates within lipid metabolism; malonyl-CoA biosynthesis; malonyl-CoA from acetyl-CoA: step 1/1. In terms of biological role, component of the acetyl coenzyme A carboxylase (ACC) complex. Biotin carboxylase (BC) catalyzes the carboxylation of biotin on its carrier protein (BCCP) and then the CO(2) group is transferred by the transcarboxylase to acetyl-CoA to form malonyl-CoA. This chain is Acetyl-coenzyme A carboxylase carboxyl transferase subunit beta, found in Exiguobacterium sibiricum (strain DSM 17290 / CCUG 55495 / CIP 109462 / JCM 13490 / 255-15).